Reading from the N-terminus, the 508-residue chain is Probable protein kinase UbiB (508 aa).

The Protein kinase domain occupies 118-494; sequence DFDLKPVASA…QKRQNFLLLL (377 aa). Residues 124–132 and K151 each bind ATP; that span reads VASASVAQV. D286 acts as the Proton acceptor in catalysis. The helical transmembrane segment at 488–508 threads the bilayer; sequence QNFLLLLIAILLAALLAKSLL.

This sequence belongs to the ABC1 family. UbiB subfamily.

It is found in the cell inner membrane. It functions in the pathway cofactor biosynthesis; ubiquinone biosynthesis [regulation]. Is probably a protein kinase regulator of UbiI activity which is involved in aerobic coenzyme Q (ubiquinone) biosynthesis. The protein is Probable protein kinase UbiB of Chromobacterium violaceum (strain ATCC 12472 / DSM 30191 / JCM 1249 / CCUG 213 / NBRC 12614 / NCIMB 9131 / NCTC 9757 / MK).